A 319-amino-acid chain; its full sequence is Ankyrin repeat domain-containing protein 1 (319 aa).

Positions 61–89 (KTEKQREAELKKKKLEQRSKLENLEDLEI) form a coiled coil. ANK repeat units lie at residues 152–181 (YKRTALHRACLEGHLAIVEKLIEAGAQIEF), 185–214 (LESTAIHWASRGGSLDVLKLLLNKGAKISA), 218–247 (LLSTPLHVAVRTGHYECAEHLIACEADLNA), 251–280 (EGDTPLHDAVRLNRYKMIRLLITYGADLNV), and 284–315 (AGKTPMDLVLHWQNGTKAIFDSLKENSYKASR).

In terms of assembly, interacts with TTN/titin and YBX1.

Its subcellular location is the nucleus. In terms of biological role, may play an important role in endothelial cell activation. May act as a nuclear transcription factor that negatively regulates the expression of cardiac genes. The sequence is that of Ankyrin repeat domain-containing protein 1 (ANKRD1) from Bos taurus (Bovine).